Reading from the N-terminus, the 79-residue chain is Cell division topological specificity factor (79 aa).

This sequence belongs to the MinE family.

Its function is as follows. Prevents the cell division inhibition by proteins MinC and MinD at internal division sites while permitting inhibition at polar sites. This ensures cell division at the proper site by restricting the formation of a division septum at the midpoint of the long axis of the cell. The sequence is that of Cell division topological specificity factor from Nitratiruptor sp. (strain SB155-2).